A 220-amino-acid polypeptide reads, in one-letter code: Deoxyribose-phosphate aldolase 1 (220 aa).

Aspartate 89 serves as the catalytic Proton donor/acceptor. The Schiff-base intermediate with acetaldehyde role is filled by lysine 151. Residue lysine 180 is the Proton donor/acceptor of the active site.

Belongs to the DeoC/FbaB aldolase family. DeoC type 1 subfamily.

The protein resides in the cytoplasm. It catalyses the reaction 2-deoxy-D-ribose 5-phosphate = D-glyceraldehyde 3-phosphate + acetaldehyde. The protein operates within carbohydrate degradation; 2-deoxy-D-ribose 1-phosphate degradation; D-glyceraldehyde 3-phosphate and acetaldehyde from 2-deoxy-alpha-D-ribose 1-phosphate: step 2/2. Functionally, catalyzes a reversible aldol reaction between acetaldehyde and D-glyceraldehyde 3-phosphate to generate 2-deoxy-D-ribose 5-phosphate. The chain is Deoxyribose-phosphate aldolase 1 from Staphylococcus aureus (strain MSSA476).